Consider the following 380-residue polypeptide: MNITGKGAYDTGTYANLFQRSGYREDEIKARLEQTWNDLFYGDEHTRIYYPVGDDKGYMLDTGNDDVRSEGMSYGMMMAVQMDKKHEFDRLWNYAYTYMQHTEGRYKDYFAWHCKPDGTRLSPGPAPDGEEFFAMALFFASNRWGDGPAPYDYQAQARKILHACLHQGEQGEGDPMWEPSNRLIKFIPELPFSDPSYHLPHFYELFAQYANEQDRTFWKEAAEASRAYLRTACHPVTGLSPEYANYDGTPAPVQLHGDFRHFYSDAYRVAANVALDWEWFRKDPWQVQQSNRIQAFFSDIDVSDYRRYTIEGEPFNEPALHPVGLLATNAMASLAADGPDADSFVKRFWNTPLRQGKRRYYDNCLYFFTMLALSGNYRVY.

Catalysis depends on glutamate 70, which acts as the Proton donor. Aspartate 265 serves as the catalytic Proton acceptor.

This sequence belongs to the glycosyl hydrolase 8 (cellulase D) family.

It catalyses the reaction Hydrolysis of (1-&gt;4)-beta-D-xylose residues from the reducing end of oligosaccharides.. Its pathway is glycan degradation; xylan degradation. Its function is as follows. Involved in depolymerization of xylan, a major component of the lignocellulosic substrates. Acts as an exo-oligoxylanase that efficiently hydrolyzes xylooligosaccharides, releasing xylose from their reducing ends. Hydrolyzes xylooligomers of 3 to 6 xylose units to xylose and xylobiose. Besides linear xylooligosaccharides, also hydrolyzes branched xylooligomers, such as xylooligomers decorated with 4-O-methyl-D-glucuronic acid moieties. Its proposed role is the degradation of xylooligomers produced by the activity of extracellular xylanases once they have been transported inside cells. Shows minor activity on polymeric xylan (glucuronoxylan from beechwood). Is not active on cellooligosaccharides or cellulosic substrates, or on other polysaccharides such as pectin, polygalacturonic acid, laminarin, or lichenan. The chain is Reducing-end xylose-releasing exo-oligoxylanase Rex8A from Paenibacillus barcinonensis.